A 391-amino-acid chain; its full sequence is Cilia- and flagella-associated protein 263 (391 aa).

Positions 1–21 (MTDDDSETSASETQAQEESDL) are disordered. 2 coiled-coil regions span residues 95–243 (LSVD…NQEL) and 294–369 (LRKE…LKGY).

The protein belongs to the CFAP263 family. Forms a complex with CFAP184; the interaction is required for functional activity in cilia. Interacts with HAP1 and PCM1.

It is found in the cytoplasm. Its subcellular location is the cytoskeleton. The protein resides in the microtubule organizing center. The protein localises to the centrosome. It localises to the centriolar satellite. It is found in the cell projection. Its subcellular location is the cilium. Its function is as follows. Component of centriolar satellites contributing to primary cilium formation. In complex with CFAP263, acts as a regulator of ciliary beating that connects radial spoke 3 (RS3) to the inner dynein arm (IDA) and the nexin-dynein regulatory complex (N-DRC). The complex is positioned parallel to N-DRC and forms a connection between the arch at the base of RS3, the IDA tail and N-DRC. The polypeptide is Cilia- and flagella-associated protein 263 (CFAP263) (Bos taurus (Bovine)).